The sequence spans 120 residues: NAD(P)H-quinone oxidoreductase subunit 3 (120 aa).

Transmembrane regions (helical) follow at residues 6–26, 64–84, and 89–109; these read GYDA…LALV, MFAL…PWAV, and LGLL…VALA.

The protein belongs to the complex I subunit 3 family. In terms of assembly, NDH-1 can be composed of about 15 different subunits; different subcomplexes with different compositions have been identified which probably have different functions.

The protein localises to the cellular thylakoid membrane. The catalysed reaction is a plastoquinone + NADH + (n+1) H(+)(in) = a plastoquinol + NAD(+) + n H(+)(out). It catalyses the reaction a plastoquinone + NADPH + (n+1) H(+)(in) = a plastoquinol + NADP(+) + n H(+)(out). In terms of biological role, NDH-1 shuttles electrons from an unknown electron donor, via FMN and iron-sulfur (Fe-S) centers, to quinones in the respiratory and/or the photosynthetic chain. The immediate electron acceptor for the enzyme in this species is believed to be plastoquinone. Couples the redox reaction to proton translocation, and thus conserves the redox energy in a proton gradient. Cyanobacterial NDH-1 also plays a role in inorganic carbon-concentration. This is NAD(P)H-quinone oxidoreductase subunit 3 from Prochlorococcus marinus (strain SARG / CCMP1375 / SS120).